Here is a 90-residue protein sequence, read N- to C-terminus: Protein LURE 1.5 (90 aa).

The N-terminal stretch at 1–19 is a signal peptide; it reads MKLPIIFLTLLIFVSSCTS. 2 disulfides stabilise this stretch: Cys-58/Cys-75 and Cys-61/Cys-82.

Belongs to the DEFL family. In terms of tissue distribution, expressed in the pistil. Detected exclusively in the synergid cells.

Its subcellular location is the secreted. Inactive pollen tube attractants guiding pollen tubes to the ovular micropyle. The sequence is that of Protein LURE 1.5 from Arabidopsis thaliana (Mouse-ear cress).